Reading from the N-terminus, the 367-residue chain is 2-aminoethylphosphonate--pyruvate transaminase (367 aa).

Residue K194 is modified to N6-(pyridoxal phosphate)lysine.

This sequence belongs to the class-V pyridoxal-phosphate-dependent aminotransferase family. PhnW subfamily. As to quaternary structure, homodimer. It depends on pyridoxal 5'-phosphate as a cofactor.

The catalysed reaction is (2-aminoethyl)phosphonate + pyruvate = phosphonoacetaldehyde + L-alanine. In terms of biological role, involved in phosphonate degradation. The chain is 2-aminoethylphosphonate--pyruvate transaminase from Salmonella dublin (strain CT_02021853).